Here is a 382-residue protein sequence, read N- to C-terminus: Mannitol-1-phosphate 5-dehydrogenase (382 aa).

3-14 contacts NAD(+); the sequence is ALHFGAGNIGRG.

The protein belongs to the mannitol dehydrogenase family.

The enzyme catalyses D-mannitol 1-phosphate + NAD(+) = beta-D-fructose 6-phosphate + NADH + H(+). The polypeptide is Mannitol-1-phosphate 5-dehydrogenase (Salmonella typhi).